The chain runs to 175 residues: Acireductone dioxygenase (175 aa).

The Fe(2+) site is built by histidine 81, histidine 83, glutamate 87, and histidine 126. Residues histidine 81, histidine 83, glutamate 87, and histidine 126 each coordinate Ni(2+).

It belongs to the acireductone dioxygenase (ARD) family. Fe(2+) is required as a cofactor. Requires Ni(2+) as cofactor.

It is found in the cytoplasm. Its subcellular location is the nucleus. It carries out the reaction 1,2-dihydroxy-5-(methylsulfanyl)pent-1-en-3-one + O2 = 4-methylsulfanyl-2-oxobutanoate + formate + 2 H(+). The enzyme catalyses 1,2-dihydroxy-5-(methylsulfanyl)pent-1-en-3-one + O2 = 3-(methylsulfanyl)propanoate + CO + formate + 2 H(+). Its pathway is amino-acid biosynthesis; L-methionine biosynthesis via salvage pathway; L-methionine from S-methyl-5-thio-alpha-D-ribose 1-phosphate: step 5/6. Its function is as follows. Catalyzes 2 different reactions between oxygen and the acireductone 1,2-dihydroxy-3-keto-5-methylthiopentene (DHK-MTPene) depending upon the metal bound in the active site. Fe-containing acireductone dioxygenase (Fe-ARD) produces formate and 2-keto-4-methylthiobutyrate (KMTB), the alpha-ketoacid precursor of methionine in the methionine recycle pathway. Ni-containing acireductone dioxygenase (Ni-ARD) produces methylthiopropionate, carbon monoxide and formate, and does not lie on the methionine recycle pathway. This chain is Acireductone dioxygenase, found in Phaeosphaeria nodorum (strain SN15 / ATCC MYA-4574 / FGSC 10173) (Glume blotch fungus).